A 364-amino-acid polypeptide reads, in one-letter code: Phosphoserine aminotransferase (364 aa).

R41 contributes to the L-glutamate binding site. Pyridoxal 5'-phosphate contacts are provided by residues 75-76, W100, T155, D175, and Q198; that span reads AS. The residue at position 199 (K199) is an N6-(pyridoxal phosphate)lysine. Residue 239–240 coordinates pyridoxal 5'-phosphate; it reads NT.

Belongs to the class-V pyridoxal-phosphate-dependent aminotransferase family. SerC subfamily. In terms of assembly, homodimer. Pyridoxal 5'-phosphate serves as cofactor.

It localises to the cytoplasm. It catalyses the reaction O-phospho-L-serine + 2-oxoglutarate = 3-phosphooxypyruvate + L-glutamate. The catalysed reaction is 4-(phosphooxy)-L-threonine + 2-oxoglutarate = (R)-3-hydroxy-2-oxo-4-phosphooxybutanoate + L-glutamate. It functions in the pathway amino-acid biosynthesis; L-serine biosynthesis; L-serine from 3-phospho-D-glycerate: step 2/3. Functionally, catalyzes the reversible conversion of 3-phosphohydroxypyruvate to phosphoserine and of 3-hydroxy-2-oxo-4-phosphonooxybutanoate to phosphohydroxythreonine. In Streptococcus thermophilus (strain CNRZ 1066), this protein is Phosphoserine aminotransferase.